Consider the following 905-residue polypeptide: DNA mismatch repair protein MutS (905 aa).

Residues 388-410 (LERPANPEGTYPTDAETSGDTLP) are disordered. An ATP-binding site is contributed by 638 to 645 (GPNMAGKS). Positions 826–847 (RDAARGTNSAPSRQTLPGLDLP) are disordered. Residues 831–840 (GTNSAPSRQT) show a composition bias toward polar residues.

It belongs to the DNA mismatch repair MutS family.

Its function is as follows. This protein is involved in the repair of mismatches in DNA. It is possible that it carries out the mismatch recognition step. This protein has a weak ATPase activity. The polypeptide is DNA mismatch repair protein MutS (Nitratidesulfovibrio vulgaris (strain DP4) (Desulfovibrio vulgaris)).